Reading from the N-terminus, the 475-residue chain is Dihydrolipoyl dehydrogenase (475 aa).

Residues 36 to 45 (ERYNTLGGVC), Lys54, and Gly117 each bind FAD. An intrachain disulfide couples Cys45 to Cys50. NAD(+) contacts are provided by residues 182–186 (GGGII), Glu205, Val238, and 270–273 (AIGR). FAD contacts are provided by Asp313 and Ala321. His445 serves as the catalytic Proton acceptor.

It belongs to the class-I pyridine nucleotide-disulfide oxidoreductase family. FAD is required as a cofactor.

The protein resides in the cytoplasm. The enzyme catalyses N(6)-[(R)-dihydrolipoyl]-L-lysyl-[protein] + NAD(+) = N(6)-[(R)-lipoyl]-L-lysyl-[protein] + NADH + H(+). The branched-chain alpha-keto dehydrogenase complex catalyzes the overall conversion of alpha-keto acids to acyl-CoA and CO(2). It contains multiple copies of 3 enzymatic components: branched-chain alpha-keto acid decarboxylase (E1), lipoamide acyltransferase (E2) and lipoamide dehydrogenase (E3). The polypeptide is Dihydrolipoyl dehydrogenase (lpd) (Vibrio cholerae serotype O1 (strain ATCC 39315 / El Tor Inaba N16961)).